Reading from the N-terminus, the 288-residue chain is Probable coatomer subunit epsilon (288 aa).

Ser-262 is modified (phosphoserine).

This sequence belongs to the COPE family. Oligomeric complex that consists of at least the alpha, beta, beta', gamma, delta, epsilon and zeta subunits.

Its subcellular location is the cytoplasm. The protein resides in the golgi apparatus membrane. The protein localises to the cytoplasmic vesicle. It is found in the COPI-coated vesicle membrane. Functionally, the coatomer is a cytosolic protein complex that binds to dilysine motifs and reversibly associates with Golgi non-clathrin-coated vesicles, which further mediate biosynthetic protein transport from the ER, via the Golgi up to the trans Golgi network. The coatomer complex is required for budding from Golgi membranes, and is essential for the retrograde Golgi-to-ER transport of dilysine-tagged proteins. This is Probable coatomer subunit epsilon (sec28) from Schizosaccharomyces pombe (strain 972 / ATCC 24843) (Fission yeast).